Consider the following 333-residue polypeptide: MSGFGDGYVGTAQDAVKIRRLEKQREAERRKIEELKNKSSDGQPGLLQFGSSTSEILETAFKKETVGLVTREQYVEKRVNIRTKIEEEEKEKLQKLQQEEEELQMQKRKKRRVRGDPRLSFCDEIENGSDEDEFENQEPQKKHGPVKLGKDPTVETSFLPDREREAEEQAERERLKKQWSREQELIKNEPLTITYSYWDGTGHRRVIQVRKGDSIGEFLRAVQQQLAPEFREVRTTSVENLLYVKEDLIIPHQHSFYELIINKARGKSGPLFHFDVHEDVRTIADATKEKDESHAGKVVERHWYEKNKHIFPASRWEIYDPTKKWERYTIHGD.

2 coiled-coil regions span residues 12 to 43 (AQDAVKIRRLEKQREAERRKIEELKNKSSDGQ) and 70 to 116 (TREQ…VRGD). Positions 89 to 98 (EKEKLQKLQQ) are enriched in basic and acidic residues. Residues 89 to 171 (EKEKLQKLQQ…REREAEEQAE (83 aa)) are disordered. Residues 123–136 (DEIENGSDEDEFEN) are compositionally biased toward acidic residues. Positions 160–171 (PDREREAEEQAE) are enriched in basic and acidic residues.

The protein belongs to the FAM50 family.

The protein resides in the nucleus. Its function is as follows. Involved in light regulation of the circadian clock and photomorphogenesis. The sequence is that of Protein XAP5 CIRCADIAN TIMEKEEPER (XCT) from Oryza sativa subsp. indica (Rice).